Consider the following 413-residue polypeptide: Alpha-1-antitrypsin-like protein GS55-MS (413 aa).

An N-terminal signal peptide occupies residues 1–24; the sequence is MPSSISWGLLLLAGLSCLVAGSLA. N65, N102, and N266 each carry an N-linked (GlcNAc...) asparagine glycan. Residues 368 to 387 form an RCL region; the sequence is GATFLEMMPMSLPPEVKFDK.

It belongs to the serpin family.

The protein localises to the secreted. In terms of biological role, inhibitor of serine proteases. Its primary target is elastase, but it also has a moderate affinity for plasmin and thrombin. This Ictidomys tridecemlineatus (Thirteen-lined ground squirrel) protein is Alpha-1-antitrypsin-like protein GS55-MS.